Consider the following 147-residue polypeptide: Large ribosomal subunit protein uL13 (147 aa).

This sequence belongs to the universal ribosomal protein uL13 family. In terms of assembly, part of the 50S ribosomal subunit.

Functionally, this protein is one of the early assembly proteins of the 50S ribosomal subunit, although it is not seen to bind rRNA by itself. It is important during the early stages of 50S assembly. This chain is Large ribosomal subunit protein uL13, found in Mycolicibacterium gilvum (strain PYR-GCK) (Mycobacterium gilvum (strain PYR-GCK)).